The chain runs to 798 residues: Capsid assembly protein UL37 homolog (798 aa).

This sequence belongs to the herpesviridae HHV-1 UL37 family.

The protein localises to the virion tegument. The sequence is that of Capsid assembly protein UL37 homolog (U30) from Homo sapiens (Human).